Here is a 308-residue protein sequence, read N- to C-terminus: Putative S-adenosyl-L-methionine-dependent methyltransferase MAB_4585c (308 aa).

Residues Asp-131 and 160–161 each bind S-adenosyl-L-methionine; that span reads DL.

Belongs to the UPF0677 family.

Functionally, exhibits S-adenosyl-L-methionine-dependent methyltransferase activity. The protein is Putative S-adenosyl-L-methionine-dependent methyltransferase MAB_4585c of Mycobacteroides abscessus (strain ATCC 19977 / DSM 44196 / CCUG 20993 / CIP 104536 / JCM 13569 / NCTC 13031 / TMC 1543 / L948) (Mycobacterium abscessus).